Consider the following 258-residue polypeptide: Alcohol dehydrogenase 2 (258 aa).

An NAD(+)-binding site is contributed by 9 to 33; it reads IFVGGLGFIGYEACKQLMAKNMASF. Ser137 contacts substrate. Residue Tyr150 is the Proton acceptor of the active site.

The protein belongs to the short-chain dehydrogenases/reductases (SDR) family. In terms of assembly, homodimer.

It catalyses the reaction a primary alcohol + NAD(+) = an aldehyde + NADH + H(+). It carries out the reaction a secondary alcohol + NAD(+) = a ketone + NADH + H(+). In Ceratitis capitata (Mediterranean fruit fly), this protein is Alcohol dehydrogenase 2 (ADH2).